A 142-amino-acid chain; its full sequence is Large ribosomal subunit protein uL11 (142 aa).

This sequence belongs to the universal ribosomal protein uL11 family. As to quaternary structure, part of the ribosomal stalk of the 50S ribosomal subunit. Interacts with L10 and the large rRNA to form the base of the stalk. L10 forms an elongated spine to which L12 dimers bind in a sequential fashion forming a multimeric L10(L12)X complex. Post-translationally, one or more lysine residues are methylated.

Functionally, forms part of the ribosomal stalk which helps the ribosome interact with GTP-bound translation factors. This chain is Large ribosomal subunit protein uL11, found in Vibrio vulnificus (strain CMCP6).